The primary structure comprises 463 residues: MHLHFTPRQIVEKLDQYIIGQKDAKKAVAVALRNRYRRSKLAENLRDEIAPKNILMIGPTGVGKTEVARRMAKLVGAPFIKVEATKFTEVGYVGRDVESMVRDLVETSVRIVKEEMVVKVQDKAEEQANQRLVEILVPSPEKQSGFKNPLEMLFGGAQNSNQTSDTQEDVEIEKKRQDVERKLAAGLLEEEIVSIEVTEQQSSMFDMLQGTGMEQMGMNFQDALGSFMPKKTKKRKLSVKEARKLLTNEEAQRLIDMDEVTQEAVYRAEQLGIIFIDEIDKIAGKQSNSVDVSREGVQRDILPIVEGSNVATKYGSVKTDYILFVAAGAFHMSKPSDLIPELQGRFPIRVELTKLSTDDFVKILIEPDNALIKQYMALLATEGIEIEFSDEAIRKIAEIAYQVNQDTDNIGARRLHTIMEKLLEDLSFEASEITLEKITITPQYVEEKLATIAKNKDVSQFIL.

ATP-binding positions include isoleucine 19, 61 to 66 (GVGKTE), aspartate 277, glutamate 341, and arginine 413.

Belongs to the ClpX chaperone family. HslU subfamily. As to quaternary structure, a double ring-shaped homohexamer of HslV is capped on each side by a ring-shaped HslU homohexamer. The assembly of the HslU/HslV complex is dependent on binding of ATP.

The protein localises to the cytoplasm. Its function is as follows. ATPase subunit of a proteasome-like degradation complex; this subunit has chaperone activity. The binding of ATP and its subsequent hydrolysis by HslU are essential for unfolding of protein substrates subsequently hydrolyzed by HslV. HslU recognizes the N-terminal part of its protein substrates and unfolds these before they are guided to HslV for hydrolysis. The sequence is that of ATP-dependent protease ATPase subunit HslU from Bacillus cereus (strain B4264).